The chain runs to 838 residues: DNA gyrase subunit A (838 aa).

The Topo IIA-type catalytic domain occupies 41–510 (LPEVRDGLKP…ADGDVSDEDL (470 aa)). Residue Tyr129 is the O-(5'-phospho-DNA)-tyrosine intermediate of the active site. Positions 537–543 (QKRGGKG) match the GyrA-box motif.

Belongs to the type II topoisomerase GyrA/ParC subunit family. As to quaternary structure, heterotetramer, composed of two GyrA and two GyrB chains. In the heterotetramer, GyrA contains the active site tyrosine that forms a transient covalent intermediate with DNA, while GyrB binds cofactors and catalyzes ATP hydrolysis.

The protein localises to the cytoplasm. It catalyses the reaction ATP-dependent breakage, passage and rejoining of double-stranded DNA.. In terms of biological role, a type II topoisomerase that negatively supercoils closed circular double-stranded (ds) DNA in an ATP-dependent manner to modulate DNA topology and maintain chromosomes in an underwound state. Negative supercoiling favors strand separation, and DNA replication, transcription, recombination and repair, all of which involve strand separation. Also able to catalyze the interconversion of other topological isomers of dsDNA rings, including catenanes and knotted rings. Type II topoisomerases break and join 2 DNA strands simultaneously in an ATP-dependent manner. This chain is DNA gyrase subunit A, found in Mycobacterium tuberculosis (strain CDC 1551 / Oshkosh).